The chain runs to 201 residues: L(+)-tartrate dehydratase subunit beta (201 aa).

Residue H37 is part of the active site.

It belongs to the class-I fumarase family. As to quaternary structure, heterotetramer of two alpha and two beta subunits.

The catalysed reaction is (2R,3R)-tartrate = oxaloacetate + H2O. The chain is L(+)-tartrate dehydratase subunit beta (ttdB) from Shigella sonnei (strain Ss046).